Reading from the N-terminus, the 391-residue chain is Septation protein etd1 (391 aa).

Residues 49 to 68 (MKSYGSDITPRRPKQLGLPK) form a disordered region.

Functionally, involved in septation. This Schizosaccharomyces pombe (strain 972 / ATCC 24843) (Fission yeast) protein is Septation protein etd1 (etd1).